Consider the following 577-residue polypeptide: Beta-fructofuranosidase, insoluble isoenzyme 1 (577 aa).

Residues 1 to 22 (MGTRLLALAPWLLLLLLQLAGA) form the signal peptide. Aspartate 63 is an active-site residue. Residues asparagine 158, asparagine 183, and asparagine 333 are each glycosylated (N-linked (GlcNAc...) asparagine).

It belongs to the glycosyl hydrolase 32 family.

It is found in the secreted. The protein localises to the extracellular space. The protein resides in the apoplast. Its subcellular location is the cell wall. The enzyme catalyses Hydrolysis of terminal non-reducing beta-D-fructofuranoside residues in beta-D-fructofuranosides.. In terms of biological role, may play a role in sucrose partitioning during seed development and in stress response. The chain is Beta-fructofuranosidase, insoluble isoenzyme 1 (CIN1) from Oryza sativa subsp. indica (Rice).